Here is a 59-residue protein sequence, read N- to C-terminus: UPF0434 protein lpg1920 (59 aa).

The protein belongs to the UPF0434 family.

The polypeptide is UPF0434 protein lpg1920 (Legionella pneumophila subsp. pneumophila (strain Philadelphia 1 / ATCC 33152 / DSM 7513)).